A 225-amino-acid chain; its full sequence is Probable manganese catalase (225 aa).

E37 is a binding site for Mn(2+). Ca(2+) is bound by residues D58 and D62. Residues E67, H70, E138, and H171 each contribute to the Mn(2+) site. Ca(2+) is bound at residue S204. Positions 204-225 (STPGRYVQDPNPTEPSFSNPRR) are disordered. Residues 213 to 225 (PNPTEPSFSNPRR) show a composition bias toward polar residues.

Belongs to the manganese catalase family. It depends on Ca(2+) as a cofactor. Requires Mn(2+) as cofactor.

The catalysed reaction is 2 H2O2 = O2 + 2 H2O. Catalyzes the decomposition of hydrogen peroxide into water and oxygen. The chain is Probable manganese catalase from Clostridium acetobutylicum (strain ATCC 824 / DSM 792 / JCM 1419 / IAM 19013 / LMG 5710 / NBRC 13948 / NRRL B-527 / VKM B-1787 / 2291 / W).